The primary structure comprises 176 residues: Disulfide bond formation protein B (176 aa).

Over 1 to 14 (MMRSLNRCSKHRAA) the chain is Cytoplasmic. A helical transmembrane segment spans residues 15–31 (WLLLALTTFSLELVALY). Topologically, residues 32 to 49 (FQHVMLLKPCVLCVYQRC) are periplasmic. Cysteine 41 and cysteine 44 are disulfide-bonded. The helical transmembrane segment at 50–65 (ALYGVVAAGLVGAIAP) threads the bilayer. The Cytoplasmic portion of the chain corresponds to 66-71 (ATPLRF). Residues 72–89 (SGLAIWLYSAWEGLQLAM) traverse the membrane as a helical segment. Over 90-144 (KHTDIQLHPSPFVTCDFFVSFPAWLPLDKWLPSVFSASGDCAVRQWHFLSLEMPQ) the chain is Periplasmic. Residues cysteine 104 and cysteine 130 are joined by a disulfide bond. A helical transmembrane segment spans residues 145 to 163 (WMIVIFGAYLAVAVLILLA). Residues 164–176 (QFFPPRKRDLFSR) are Cytoplasmic-facing.

This sequence belongs to the DsbB family.

The protein localises to the cell inner membrane. Functionally, required for disulfide bond formation in some periplasmic proteins. Acts by oxidizing the DsbA protein. The chain is Disulfide bond formation protein B from Sodalis glossinidius (strain morsitans).